A 484-amino-acid polypeptide reads, in one-letter code: tRNA sulfurtransferase (484 aa).

In terms of domain architecture, THUMP spans 63-167; the sequence is EAFGERLACI…NDNLYLIDKR (105 aa). Residues 185 to 186, Lys267, Gly289, and Gln298 each bind ATP; that span reads LI. Residues Cys346 and Cys458 are joined by a disulfide bond. In terms of domain architecture, Rhodanese spans 406-484; that stretch reads INANEIIIDV…GYTNVKVYRP (79 aa). Cys458 (cysteine persulfide intermediate) is an active-site residue.

It belongs to the ThiI family.

The protein resides in the cytoplasm. It catalyses the reaction [ThiI sulfur-carrier protein]-S-sulfanyl-L-cysteine + a uridine in tRNA + 2 reduced [2Fe-2S]-[ferredoxin] + ATP + H(+) = [ThiI sulfur-carrier protein]-L-cysteine + a 4-thiouridine in tRNA + 2 oxidized [2Fe-2S]-[ferredoxin] + AMP + diphosphate. The catalysed reaction is [ThiS sulfur-carrier protein]-C-terminal Gly-Gly-AMP + S-sulfanyl-L-cysteinyl-[cysteine desulfurase] + AH2 = [ThiS sulfur-carrier protein]-C-terminal-Gly-aminoethanethioate + L-cysteinyl-[cysteine desulfurase] + A + AMP + 2 H(+). The protein operates within cofactor biosynthesis; thiamine diphosphate biosynthesis. Functionally, catalyzes the ATP-dependent transfer of a sulfur to tRNA to produce 4-thiouridine in position 8 of tRNAs, which functions as a near-UV photosensor. Also catalyzes the transfer of sulfur to the sulfur carrier protein ThiS, forming ThiS-thiocarboxylate. This is a step in the synthesis of thiazole, in the thiamine biosynthesis pathway. The sulfur is donated as persulfide by IscS. This Shewanella halifaxensis (strain HAW-EB4) protein is tRNA sulfurtransferase.